The sequence spans 181 residues: Adenylyl-sulfate kinase (181 aa).

13 to 20 (GVSGAGKS) is a binding site for ATP. Catalysis depends on Ser-87, which acts as the Phosphoserine intermediate.

It belongs to the APS kinase family.

The catalysed reaction is adenosine 5'-phosphosulfate + ATP = 3'-phosphoadenylyl sulfate + ADP + H(+). The protein operates within sulfur metabolism; hydrogen sulfide biosynthesis; sulfite from sulfate: step 2/3. Catalyzes the synthesis of activated sulfate. This chain is Adenylyl-sulfate kinase, found in Burkholderia ambifaria (strain ATCC BAA-244 / DSM 16087 / CCUG 44356 / LMG 19182 / AMMD) (Burkholderia cepacia (strain AMMD)).